The sequence spans 473 residues: Heavy metal-associated isoprenylated plant protein 32 (473 aa).

The HMA domain maps to 9-72 (IQTCVLKVNI…KLAKSGKHAE (64 aa)). Residues Cys20 and Cys23 each contribute to the a metal cation site. Disordered stretches follow at residues 96–139 (QIDH…KMGQ), 162–230 (KLPP…PNMT), and 246–343 (ANLA…QNMS). Positions 118–131 (KNGGGGGGGGGGGN) are enriched in gly residues. The segment covering 187-217 (PEDDDDDDFSDEFDDEFTDDDDDEFDDEFDD) has biased composition (acidic residues). Residues 253-339 (AKNGGKGAPA…GFRPMGGGGP (87 aa)) are compositionally biased toward gly residues. Cys470 carries the cysteine methyl ester modification. Cys470 carries the S-farnesyl cysteine lipid modification. Residues 471–473 (DIM) constitute a propeptide, removed in mature form.

It belongs to the HIPP family.

Functionally, heavy-metal-binding protein. This chain is Heavy metal-associated isoprenylated plant protein 32, found in Arabidopsis thaliana (Mouse-ear cress).